We begin with the raw amino-acid sequence, 337 residues long: Draxin (337 aa).

The signal sequence occupies residues 1-24; sequence MLLLALLLLLELSLAGSLGPGSSA. Disordered stretches follow at residues 36–67, 107–133, and 234–261; these read GPAL…WTQD, RPYP…KRRK, and WPST…KGEP. Basic residues-rich tracts occupy residues 122 to 133 and 237 to 246; these read VKKRGREHKRRK and TRKKEKHRGK. A glycan (N-linked (GlcNAc...) asparagine) is linked at Asn252.

It belongs to the draxin family. As to quaternary structure, interacts with LRP6.

It is found in the secreted. Its function is as follows. Chemorepulsive axon guidance protein required for the development of spinal cord and forebrain commissures. Acts as a chemorepulsive guidance protein for commissural axons during development. Able to inhibit or repel neurite outgrowth from dorsal spinal cord. Inhibits the stabilization of cytosolic beta-catenin (CTNNB1) via its interaction with LRP6, thereby acting as an antagonist of Wnt signaling pathway. This is Draxin from Bos taurus (Bovine).